Consider the following 473-residue polypeptide: Glycosyl hydrolase family 109 protein 2 (473 aa).

The segment at residues 1-31 (MSIFSSRRQFLKSLGLAAGAAAAGNALPGKA) is a signal peptide (tat-type signal). NAD(+) contacts are provided by residues 77-78 (GR), Asp99, 148-151 (WSSH), 168-169 (EV), and Asn197. Substrate contacts are provided by residues Tyr226, Arg244, 256–259 (YPTH), and Tyr339. Tyr256 is an NAD(+) binding site.

It belongs to the Gfo/Idh/MocA family. Glycosyl hydrolase 109 subfamily. The cofactor is NAD(+). In terms of processing, predicted to be exported by the Tat system. The position of the signal peptide cleavage has not been experimentally proven.

Functionally, glycosidase. The polypeptide is Glycosyl hydrolase family 109 protein 2 (Akkermansia muciniphila (strain ATCC BAA-835 / DSM 22959 / JCM 33894 / BCRC 81048 / CCUG 64013 / CIP 107961 / Muc)).